The following is a 514-amino-acid chain: AAA-ATPase ASD, mitochondrial (514 aa).

The helical transmembrane segment at 7-24 threads the bilayer; that stretch reads VWTNTGSALASLVFIYTI. ATP is bound at residue 250-257; sequence GPPGTGKS. 2 disordered regions span residues 311-342 and 467-514; these read GQRKQKKDEEEDEDETSPIEKQMKKDQGENKG and KEEA…TMKD. 2 stretches are compositionally biased toward basic and acidic residues: residues 331–342 and 467–502; these read KQMKKDQGENKG and KEEAKRRIEDEEKKKKEEEEIKRKKREEKKIKKEEK.

The protein belongs to the AAA ATPase family. BCS1 subfamily. Requires Mg(2+) as cofactor. Expressed in seeds, specifically in the embryo.

The protein localises to the mitochondrion membrane. The enzyme catalyses ATP + H2O = ADP + phosphate + H(+). Functionally, required to regulate morphology and anatomy during seed maturation. The polypeptide is AAA-ATPase ASD, mitochondrial (AATP1) (Arabidopsis thaliana (Mouse-ear cress)).